We begin with the raw amino-acid sequence, 408 residues long: Putative F-box protein At1g53550 (408 aa).

One can recognise an F-box domain in the interval 29 to 74 (TCYFDPIPVDLVINILSRLSLECIARCRCVSKLWSSIIRRPNYNQL).

This chain is Putative F-box protein At1g53550, found in Arabidopsis thaliana (Mouse-ear cress).